Reading from the N-terminus, the 335-residue chain is Glyceraldehyde-3-phosphate dehydrogenase, cytosolic (335 aa).

NAD(+) is bound by residues 13–14, Asp35, and Arg80; that span reads RI. Residues 151-153, Thr182, 211-212, and Arg234 each bind D-glyceraldehyde 3-phosphate; these read SCT and TG. Catalysis depends on Cys152, which acts as the Nucleophile. Residue Asn316 coordinates NAD(+).

Belongs to the glyceraldehyde-3-phosphate dehydrogenase family. In terms of assembly, homotetramer.

The protein resides in the cytoplasm. It catalyses the reaction D-glyceraldehyde 3-phosphate + phosphate + NAD(+) = (2R)-3-phospho-glyceroyl phosphate + NADH + H(+). It participates in carbohydrate degradation; glycolysis; pyruvate from D-glyceraldehyde 3-phosphate: step 1/5. The polypeptide is Glyceraldehyde-3-phosphate dehydrogenase, cytosolic (GAPC) (Chondrus crispus (Carrageen Irish moss)).